The chain runs to 1362 residues: Leptomycin B resistance protein pmd1 (1362 aa).

The segment at 1–45 is disordered; that stretch reads MSLHSKKSTSTVKDNEHSLDLSIKSIPSNEKNFSTEKSENEASES. At 1–91 the chain is on the cytoplasmic side; that stretch reads MSLHSKKSTS…RILSYADKWD (91 aa). Basic and acidic residues predominate over residues 33 to 45; the sequence is FSTEKSENEASES. A run of 6 helical transmembrane segments spans residues 92–115, 138–162, 220–237, 244–264, 320–346, and 354–374; these read IMLQ…MSLV, TVDH…IYTV, LVFF…IAFI, LILS…VPFI, AIAM…WEGG, and LDVS…YSLA. Residues 95-385 form the ABC transmembrane type-1 1 domain; it reads QLAGTITGIG…ISPKMQSFVS (291 aa). The Cytoplasmic portion of the chain corresponds to 375–788; the sequence is NISPKMQSFV…LWFIHSFVRT (414 aa). The region spanning 420-665 is the ABC transporter 1 domain; it reads IELKNIRFVY…NGAYARLVEA (246 aa). 455 to 462 serves as a coordination point for ATP; sequence GASGSGKS. The disordered stretch occupies residues 748 to 768; it reads LPPADVGELNEEPKKSKKSKK. The next 6 membrane-spanning stretches (helical) occupy residues 789-809, 835-859, 916-935, 940-957, 1022-1040, and 1054-1072; these read MIEI…GAAY, VNVF…SNFA, LGTF…LSLA, LGLV…AGYY, GLFF…ALTF, and IVQF…QQAG. Positions 795 to 1083 constitute an ABC transmembrane type-1 2 domain; sequence LLIGILASMI…FFGYSADVTK (289 aa). The Cytoplasmic segment spans residues 1073 to 1362; sequence QFFGYSADVT…LVVEQGLNKA (290 aa). The 238-residue stretch at 1119-1356 folds into the ABC transporter 2 domain; it reads IEFRQVEFSY…RGRYYELVVE (238 aa). 1154-1161 serves as a coordination point for ATP; it reads GSSGCGKS.

Belongs to the ABC transporter superfamily. ABCB family. Multidrug resistance exporter (TC 3.A.1.201) subfamily.

Its subcellular location is the membrane. Functionally, may be a transmembrane transporter of the mating factor, namely P-factor or M-factor. Confers resistance to leptomycin B and to several other antifungal drugs. This Schizosaccharomyces pombe (strain 972 / ATCC 24843) (Fission yeast) protein is Leptomycin B resistance protein pmd1 (pmd1).